The chain runs to 404 residues: Cysteine desulfurase IscS (404 aa).

Pyridoxal 5'-phosphate-binding positions include 75–76 (AT), asparagine 155, glutamine 183, and 203–205 (SAH). An N6-(pyridoxal phosphate)lysine modification is found at lysine 206. Threonine 243 contributes to the pyridoxal 5'-phosphate binding site. The active-site Cysteine persulfide intermediate is cysteine 328. [2Fe-2S] cluster is bound at residue cysteine 328.

The protein belongs to the class-V pyridoxal-phosphate-dependent aminotransferase family. NifS/IscS subfamily. In terms of assembly, homodimer. Forms a heterotetramer with IscU, interacts with other sulfur acceptors. Requires pyridoxal 5'-phosphate as cofactor.

It is found in the cytoplasm. It catalyses the reaction (sulfur carrier)-H + L-cysteine = (sulfur carrier)-SH + L-alanine. The protein operates within cofactor biosynthesis; iron-sulfur cluster biosynthesis. Master enzyme that delivers sulfur to a number of partners involved in Fe-S cluster assembly, tRNA modification or cofactor biosynthesis. Catalyzes the removal of elemental sulfur atoms from cysteine to produce alanine. Functions as a sulfur delivery protein for Fe-S cluster synthesis onto IscU, an Fe-S scaffold assembly protein, as well as other S acceptor proteins. The chain is Cysteine desulfurase IscS from Pseudomonas fluorescens (strain ATCC BAA-477 / NRRL B-23932 / Pf-5).